A 345-amino-acid chain; its full sequence is High mobility group protein 20A (345 aa).

Disordered stretches follow at residues Met1 to Pro124 and Gln167 to Val198. Polar residues-rich tracts occupy residues Leu32–Gln48 and Leu57–Asn67. Residues Thr80–Ser94 are compositionally biased toward basic residues. The segment at residues Pro101–Gln169 is a DNA-binding region (HMG box). Over residues Met112 to Pro124 the composition is skewed to basic and acidic residues. Residues Gln167–Lys180 show a composition bias toward polar residues. The stretch at Ser227–Leu290 forms a coiled coil.

Its subcellular location is the nucleus. In terms of biological role, plays a role in neuronal differentiation. This Xenopus tropicalis (Western clawed frog) protein is High mobility group protein 20A (hmg20a).